We begin with the raw amino-acid sequence, 501 residues long: Ribose import ATP-binding protein RbsA (501 aa).

ABC transporter domains follow at residues 5 to 241 and 252 to 495; these read LQLK…VGRK and APGD…VGKL. Residue 37-44 participates in ATP binding; sequence GENGAGKS.

This sequence belongs to the ABC transporter superfamily. Ribose importer (TC 3.A.1.2.1) family. In terms of assembly, the complex is composed of an ATP-binding protein (RbsA), two transmembrane proteins (RbsC) and a solute-binding protein (RbsB).

The protein resides in the cell inner membrane. It carries out the reaction D-ribose(out) + ATP + H2O = D-ribose(in) + ADP + phosphate + H(+). Its function is as follows. Part of the ABC transporter complex RbsABC involved in ribose import. Responsible for energy coupling to the transport system. This Escherichia coli (strain K12) protein is Ribose import ATP-binding protein RbsA.